A 193-amino-acid chain; its full sequence is Pyridoxal 5'-phosphate synthase subunit PdxT (193 aa).

Position 50–52 (50–52) interacts with L-glutamine; the sequence is GES. Catalysis depends on Cys-82, which acts as the Nucleophile. L-glutamine contacts are provided by residues Arg-109 and 136–137; that span reads IR. Residues His-172 and Glu-174 each act as charge relay system in the active site.

Belongs to the glutaminase PdxT/SNO family. As to quaternary structure, in the presence of PdxS, forms a dodecamer of heterodimers. Only shows activity in the heterodimer.

The catalysed reaction is aldehydo-D-ribose 5-phosphate + D-glyceraldehyde 3-phosphate + L-glutamine = pyridoxal 5'-phosphate + L-glutamate + phosphate + 3 H2O + H(+). The enzyme catalyses L-glutamine + H2O = L-glutamate + NH4(+). It functions in the pathway cofactor biosynthesis; pyridoxal 5'-phosphate biosynthesis. Its function is as follows. Catalyzes the hydrolysis of glutamine to glutamate and ammonia as part of the biosynthesis of pyridoxal 5'-phosphate. The resulting ammonia molecule is channeled to the active site of PdxS. This chain is Pyridoxal 5'-phosphate synthase subunit PdxT, found in Streptococcus pneumoniae (strain JJA).